A 97-amino-acid polypeptide reads, in one-letter code: uncharacterized protein (97 aa).

This is an uncharacterized protein from Archaeoglobus fulgidus (strain ATCC 49558 / DSM 4304 / JCM 9628 / NBRC 100126 / VC-16).